A 191-amino-acid chain; its full sequence is Pyridoxal 5'-phosphate synthase subunit PdxT (191 aa).

46 to 48 (GES) serves as a coordination point for L-glutamine. C78 serves as the catalytic Nucleophile. L-glutamine is bound by residues R105 and 133–134 (IR). Catalysis depends on charge relay system residues H169 and E171.

It belongs to the glutaminase PdxT/SNO family. In terms of assembly, in the presence of PdxS, forms a dodecamer of heterodimers. Only shows activity in the heterodimer.

It catalyses the reaction aldehydo-D-ribose 5-phosphate + D-glyceraldehyde 3-phosphate + L-glutamine = pyridoxal 5'-phosphate + L-glutamate + phosphate + 3 H2O + H(+). It carries out the reaction L-glutamine + H2O = L-glutamate + NH4(+). Its pathway is cofactor biosynthesis; pyridoxal 5'-phosphate biosynthesis. Its function is as follows. Catalyzes the hydrolysis of glutamine to glutamate and ammonia as part of the biosynthesis of pyridoxal 5'-phosphate. The resulting ammonia molecule is channeled to the active site of PdxS. This is Pyridoxal 5'-phosphate synthase subunit PdxT from Fervidobacterium nodosum (strain ATCC 35602 / DSM 5306 / Rt17-B1).